We begin with the raw amino-acid sequence, 307 residues long: Putative ankyrin repeat protein R229 (307 aa).

ANK repeat units lie at residues 135–164, 165–194, 196–224, 226–254, 256–284, and 286–307; these read ASRVILGNRLNLRDISTFKYLMSLGVDINV, DNDKPLRWAASRGYYGLVKFLLDNGANVHA, DDEAVQLASRNGYLNVVKILVEYGANVNA, NDYAIQMACKYGYNEIVRFLVFNGANPMA, RYYPIEIATEFGNKLIVRFLLHQDKSMVY, and SYAMDIAVRNENWDLLNVLLLD.

The protein is Putative ankyrin repeat protein R229 of Acanthamoeba polyphaga (Amoeba).